Here is a 66-residue protein sequence, read N- to C-terminus: Cold shock-like protein CspLB (66 aa).

One can recognise a CSD domain in the interval 4 to 63; it reads GTVKWFNSEKGFGFIEVEGGDDVFVHFSAIEGEGFKTLDEGQSVEFEIVEGQRGPQAEKV.

Homodimer.

The protein localises to the cytoplasm. In Listeria monocytogenes serovar 1/2a (strain ATCC BAA-679 / EGD-e), this protein is Cold shock-like protein CspLB (cspLB).